Consider the following 337-residue polypeptide: Pyridoxal 5'-phosphate synthase subunit PdxS (337 aa).

D-ribose 5-phosphate is bound at residue aspartate 65. The active-site Schiff-base intermediate with D-ribose 5-phosphate is the lysine 122. Glycine 194 is a binding site for D-ribose 5-phosphate. Lysine 206 contributes to the D-glyceraldehyde 3-phosphate binding site. D-ribose 5-phosphate-binding positions include glycine 255 and 276–277; that span reads GS.

The protein belongs to the PdxS/SNZ family. In terms of assembly, in the presence of PdxT, forms a dodecamer of heterodimers.

The catalysed reaction is aldehydo-D-ribose 5-phosphate + D-glyceraldehyde 3-phosphate + L-glutamine = pyridoxal 5'-phosphate + L-glutamate + phosphate + 3 H2O + H(+). It participates in cofactor biosynthesis; pyridoxal 5'-phosphate biosynthesis. Functionally, catalyzes the formation of pyridoxal 5'-phosphate from ribose 5-phosphate (RBP), glyceraldehyde 3-phosphate (G3P) and ammonia. The ammonia is provided by the PdxT subunit. Can also use ribulose 5-phosphate and dihydroxyacetone phosphate as substrates, resulting from enzyme-catalyzed isomerization of RBP and G3P, respectively. The chain is Pyridoxal 5'-phosphate synthase subunit PdxS from Metallosphaera sedula (strain ATCC 51363 / DSM 5348 / JCM 9185 / NBRC 15509 / TH2).